The sequence spans 319 residues: Beta-ketoacyl-[acyl-carrier-protein] synthase III (319 aa).

Active-site residues include Cys110 and His246. The ACP-binding stretch occupies residues 247 to 251 (QANYR). Asn276 is a catalytic residue.

It belongs to the thiolase-like superfamily. FabH family. In terms of assembly, homodimer.

It is found in the cytoplasm. The catalysed reaction is malonyl-[ACP] + acetyl-CoA + H(+) = 3-oxobutanoyl-[ACP] + CO2 + CoA. Its pathway is lipid metabolism; fatty acid biosynthesis. In terms of biological role, catalyzes the condensation reaction of fatty acid synthesis by the addition to an acyl acceptor of two carbons from malonyl-ACP. Catalyzes the first condensation reaction which initiates fatty acid synthesis and may therefore play a role in governing the total rate of fatty acid production. Possesses both acetoacetyl-ACP synthase and acetyl transacylase activities. Its substrate specificity determines the biosynthesis of branched-chain and/or straight-chain of fatty acids. The sequence is that of Beta-ketoacyl-[acyl-carrier-protein] synthase III from Lactobacillus delbrueckii subsp. bulgaricus (strain ATCC 11842 / DSM 20081 / BCRC 10696 / JCM 1002 / NBRC 13953 / NCIMB 11778 / NCTC 12712 / WDCM 00102 / Lb 14).